Reading from the N-terminus, the 258-residue chain is 5'-nucleotidase SurE (258 aa).

The a divalent metal cation site is built by D14, D15, S45, and N101.

It belongs to the SurE nucleotidase family. Requires a divalent metal cation as cofactor.

The protein resides in the cytoplasm. It catalyses the reaction a ribonucleoside 5'-phosphate + H2O = a ribonucleoside + phosphate. In terms of biological role, nucleotidase that shows phosphatase activity on nucleoside 5'-monophosphates. The polypeptide is 5'-nucleotidase SurE (Chlorobium limicola (strain DSM 245 / NBRC 103803 / 6330)).